Consider the following 84-residue polypeptide: Small ribosomal subunit protein eS27 (84 aa).

The span at 1–16 (MPLAKDLLHPSPEEEK) shows a compositional bias: basic and acidic residues. The interval 1–23 (MPLAKDLLHPSPEEEKRKHKKKR) is disordered. Ser-11 is modified (phosphoserine). The C4-type zinc finger occupies 38–60 (PGCYKITTVFSHAQTVVLCVGCS).

Belongs to the eukaryotic ribosomal protein eS27 family. As to quaternary structure, component of the small ribosomal subunit. Part of the small subunit (SSU) processome, composed of more than 70 proteins and the RNA chaperone small nucleolar RNA (snoRNA) U3. It depends on Zn(2+) as a cofactor.

Its subcellular location is the cytoplasm. It localises to the nucleus. The protein resides in the nucleolus. Functionally, component of the small ribosomal subunit. The ribosome is a large ribonucleoprotein complex responsible for the synthesis of proteins in the cell. Required for proper rRNA processing and maturation of 18S rRNAs. Part of the small subunit (SSU) processome, first precursor of the small eukaryotic ribosomal subunit. During the assembly of the SSU processome in the nucleolus, many ribosome biogenesis factors, an RNA chaperone and ribosomal proteins associate with the nascent pre-rRNA and work in concert to generate RNA folding, modifications, rearrangements and cleavage as well as targeted degradation of pre-ribosomal RNA by the RNA exosome. This is Small ribosomal subunit protein eS27 from Mus musculus (Mouse).